The sequence spans 201 residues: Recombination protein RecR (201 aa).

The segment at Cys-59–Cys-74 adopts a C4-type zinc-finger fold. Residues Ser-82–Pro-177 form the Toprim domain.

The protein belongs to the RecR family.

May play a role in DNA repair. It seems to be involved in an RecBC-independent recombinational process of DNA repair. It may act with RecF and RecO. In Rickettsia felis (strain ATCC VR-1525 / URRWXCal2) (Rickettsia azadi), this protein is Recombination protein RecR.